The sequence spans 86 residues: Small ribosomal subunit protein eS27 (86 aa).

A C4-type zinc finger spans residues 39–61 (CQGCFNITTVFSHSQTVVVCPGC).

It belongs to the eukaryotic ribosomal protein eS27 family. The cofactor is Zn(2+).

This Hordeum vulgare (Barley) protein is Small ribosomal subunit protein eS27 (RPS27).